Reading from the N-terminus, the 789-residue chain is Glycerol-3-phosphate acyltransferase (789 aa).

Residues 275 to 280 (SHRSYI) carry the HXXXXD motif motif.

The protein belongs to the GPAT/DAPAT family.

The protein resides in the cell membrane. It carries out the reaction sn-glycerol 3-phosphate + an acyl-CoA = a 1-acyl-sn-glycero-3-phosphate + CoA. The protein operates within phospholipid metabolism; CDP-diacylglycerol biosynthesis; CDP-diacylglycerol from sn-glycerol 3-phosphate: step 1/3. This is Glycerol-3-phosphate acyltransferase from Mycobacterium tuberculosis (strain ATCC 25177 / H37Ra).